We begin with the raw amino-acid sequence, 75 residues long: MSSGALTKPQMRGLLAKRLRFHIVGAFAVSLGVAAFYKFAVAEPRKKAYADFYRNYDSMKDFEEMRKAGIFQSAK.

Residues 1–13 (MSSGALTKPQMRG) are Mitochondrial matrix-facing. The chain crosses the membrane as a helical span at residues 14–54 (LLAKRLRFHIVGAFAVSLGVAAFYKFAVAEPRKKAYADFYR). Over 55–75 (NYDSMKDFEEMRKAGIFQSAK) the chain is Mitochondrial intermembrane.

It belongs to the cytochrome c oxidase subunit 6c family. As to quaternary structure, component of the cytochrome c oxidase (complex IV, CIV), a multisubunit enzyme composed of 14 subunits. The complex is composed of a catalytic core of 3 subunits MT-CO1, MT-CO2 and MT-CO3, encoded in the mitochondrial DNA, and 11 supernumerary subunits COX4I, COX5A, COX5B, COX6A, COX6B, COX6C, COX7A, COX7B, COX7C, COX8 and NDUFA4, which are encoded in the nuclear genome. The complex exists as a monomer or a dimer and forms supercomplexes (SCs) in the inner mitochondrial membrane with NADH-ubiquinone oxidoreductase (complex I, CI) and ubiquinol-cytochrome c oxidoreductase (cytochrome b-c1 complex, complex III, CIII), resulting in different assemblies (supercomplex SCI(1)III(2)IV(1) and megacomplex MCI(2)III(2)IV(2)).

The protein resides in the mitochondrion inner membrane. It functions in the pathway energy metabolism; oxidative phosphorylation. In terms of biological role, component of the cytochrome c oxidase, the last enzyme in the mitochondrial electron transport chain which drives oxidative phosphorylation. The respiratory chain contains 3 multisubunit complexes succinate dehydrogenase (complex II, CII), ubiquinol-cytochrome c oxidoreductase (cytochrome b-c1 complex, complex III, CIII) and cytochrome c oxidase (complex IV, CIV), that cooperate to transfer electrons derived from NADH and succinate to molecular oxygen, creating an electrochemical gradient over the inner membrane that drives transmembrane transport and the ATP synthase. Cytochrome c oxidase is the component of the respiratory chain that catalyzes the reduction of oxygen to water. Electrons originating from reduced cytochrome c in the intermembrane space (IMS) are transferred via the dinuclear copper A center (CU(A)) of subunit 2 and heme A of subunit 1 to the active site in subunit 1, a binuclear center (BNC) formed by heme A3 and copper B (CU(B)). The BNC reduces molecular oxygen to 2 water molecules using 4 electrons from cytochrome c in the IMS and 4 protons from the mitochondrial matrix. This is Cytochrome c oxidase subunit 6C (COX6C) from Carlito syrichta (Philippine tarsier).